Consider the following 320-residue polypeptide: MTPRHLLAAGDLSRDDAIAILDDADRFAQALVGREVKKLPTLRGRTVVTMFYENSTRTRVSFEVAGKWMSADVINVSASGSSVSKGESLRDTALTLRAAGADALIIRHPASGAARLLADWTAGQSDGGPSVINAGDGTHEHPTQALLDALTIRQRLGGIEGRRVVIVGDILHSRVARSNVMLLHTLGAEVVLVAPPTLLPVGVADWPVTVSHDLDAELPAADAVLMLRVQAERMNGGFFPSVREYSTLYGLSDRRQAMLGGHAVVLHPGPMLRGMEIASSVADSSQSAVLQQVSNGVHIRMAVLFHVLVGLESAGEEGAA.

Residues arginine 57 and threonine 58 each contribute to the carbamoyl phosphate site. Lysine 85 contacts L-aspartate. Carbamoyl phosphate-binding residues include arginine 107, histidine 141, and glutamine 144. Residues arginine 174 and arginine 228 each coordinate L-aspartate. The carbamoyl phosphate site is built by glycine 269 and proline 270.

The protein belongs to the aspartate/ornithine carbamoyltransferase superfamily. ATCase family. As to quaternary structure, heterododecamer (2C3:3R2) of six catalytic PyrB chains organized as two trimers (C3), and six regulatory PyrI chains organized as three dimers (R2).

The catalysed reaction is carbamoyl phosphate + L-aspartate = N-carbamoyl-L-aspartate + phosphate + H(+). The protein operates within pyrimidine metabolism; UMP biosynthesis via de novo pathway; (S)-dihydroorotate from bicarbonate: step 2/3. Its function is as follows. Catalyzes the condensation of carbamoyl phosphate and aspartate to form carbamoyl aspartate and inorganic phosphate, the committed step in the de novo pyrimidine nucleotide biosynthesis pathway. This chain is Aspartate carbamoyltransferase catalytic subunit, found in Mycobacterium marinum (strain ATCC BAA-535 / M).